The sequence spans 121 residues: MARIAGVDIPRDKRVVISLTYVFGIGRTTAEKIITEAGISSETRVRDLSEDELGRIRDIIDRIKVEGDLRREVSLNIKRLMEIGSYRGLRHRRGLPVRGQNSKNNARTRKGPRRTVANKKK.

The interval 91–121 (HRRGLPVRGQNSKNNARTRKGPRRTVANKKK) is disordered. The span at 106–121 (ARTRKGPRRTVANKKK) shows a compositional bias: basic residues.

This sequence belongs to the universal ribosomal protein uS13 family. As to quaternary structure, part of the 30S ribosomal subunit. Forms a loose heterodimer with protein S19. Forms two bridges to the 50S subunit in the 70S ribosome.

In terms of biological role, located at the top of the head of the 30S subunit, it contacts several helices of the 16S rRNA. In the 70S ribosome it contacts the 23S rRNA (bridge B1a) and protein L5 of the 50S subunit (bridge B1b), connecting the 2 subunits; these bridges are implicated in subunit movement. Contacts the tRNAs in the A and P-sites. This is Small ribosomal subunit protein uS13 from Bacillus mycoides (strain KBAB4) (Bacillus weihenstephanensis).